The sequence spans 427 residues: tRNA pseudouridine synthase Pus10 (427 aa).

The active-site Nucleophile is D240. The substrate site is built by Y306 and Y378.

The protein belongs to the pseudouridine synthase Pus10 family.

The catalysed reaction is uridine(54) in tRNA = pseudouridine(54) in tRNA. The enzyme catalyses uridine(55) in tRNA = pseudouridine(55) in tRNA. In terms of biological role, responsible for synthesis of pseudouridine from uracil-54 and uracil-55 in the psi GC loop of transfer RNAs. The chain is tRNA pseudouridine synthase Pus10 from Halorubrum lacusprofundi (strain ATCC 49239 / DSM 5036 / JCM 8891 / ACAM 34).